A 414-amino-acid polypeptide reads, in one-letter code: Gamma-glutamyl phosphate reductase (414 aa).

It belongs to the gamma-glutamyl phosphate reductase family.

The protein resides in the cytoplasm. The catalysed reaction is L-glutamate 5-semialdehyde + phosphate + NADP(+) = L-glutamyl 5-phosphate + NADPH + H(+). The protein operates within amino-acid biosynthesis; L-proline biosynthesis; L-glutamate 5-semialdehyde from L-glutamate: step 2/2. Catalyzes the NADPH-dependent reduction of L-glutamate 5-phosphate into L-glutamate 5-semialdehyde and phosphate. The product spontaneously undergoes cyclization to form 1-pyrroline-5-carboxylate. This chain is Gamma-glutamyl phosphate reductase, found in Thermoanaerobacter pseudethanolicus (strain ATCC 33223 / 39E) (Clostridium thermohydrosulfuricum).